Here is a 167-residue protein sequence, read N- to C-terminus: Protein-export protein SecB (167 aa).

Belongs to the SecB family. In terms of assembly, homotetramer, a dimer of dimers. One homotetramer interacts with 1 SecA dimer.

The protein localises to the cytoplasm. One of the proteins required for the normal export of preproteins out of the cell cytoplasm. It is a molecular chaperone that binds to a subset of precursor proteins, maintaining them in a translocation-competent state. It also specifically binds to its receptor SecA. The protein is Protein-export protein SecB of Wolbachia sp. subsp. Brugia malayi (strain TRS).